A 288-amino-acid chain; its full sequence is Small ribosomal subunit protein uS9m (288 aa).

The segment at 269-288 is disordered; sequence VERKKPGKKKARKMPTWVKR.

This sequence belongs to the universal ribosomal protein uS9 family.

Its subcellular location is the mitochondrion. The chain is Small ribosomal subunit protein uS9m (MRPS9) from Candida glabrata (strain ATCC 2001 / BCRC 20586 / JCM 3761 / NBRC 0622 / NRRL Y-65 / CBS 138) (Yeast).